The primary structure comprises 157 residues: Small ribosomal subunit protein uS7 (157 aa).

This sequence belongs to the universal ribosomal protein uS7 family. As to quaternary structure, part of the 30S ribosomal subunit. Contacts proteins S9 and S11.

Functionally, one of the primary rRNA binding proteins, it binds directly to 16S rRNA where it nucleates assembly of the head domain of the 30S subunit. Is located at the subunit interface close to the decoding center, probably blocks exit of the E-site tRNA. This is Small ribosomal subunit protein uS7 from Chlamydia caviae (strain ATCC VR-813 / DSM 19441 / 03DC25 / GPIC) (Chlamydophila caviae).